We begin with the raw amino-acid sequence, 284 residues long: Bifunctional protein FolD 1 (284 aa).

Residues 166–168 (GAS) and I232 each bind NADP(+).

It belongs to the tetrahydrofolate dehydrogenase/cyclohydrolase family. Homodimer.

The enzyme catalyses (6R)-5,10-methylene-5,6,7,8-tetrahydrofolate + NADP(+) = (6R)-5,10-methenyltetrahydrofolate + NADPH. The catalysed reaction is (6R)-5,10-methenyltetrahydrofolate + H2O = (6R)-10-formyltetrahydrofolate + H(+). Its pathway is one-carbon metabolism; tetrahydrofolate interconversion. Catalyzes the oxidation of 5,10-methylenetetrahydrofolate to 5,10-methenyltetrahydrofolate and then the hydrolysis of 5,10-methenyltetrahydrofolate to 10-formyltetrahydrofolate. This is Bifunctional protein FolD 1 from Ectopseudomonas mendocina (strain ymp) (Pseudomonas mendocina).